We begin with the raw amino-acid sequence, 282 residues long: Protein canopy homolog 3 (282 aa).

Positions 1 to 33 (MEPLPEPASGPRPRPHRLLLLSLLLLLLPLLPA) are cleaved as a signal peptide. A Saposin B-type domain is found at 53–275 (SKCEVCKYVA…EGIQKASPLT (223 aa)). Disulfide bonds link C55-C212, C58-C200, and C110-C172. N-linked (GlcNAc...) asparagine glycosylation occurs at N159. A coiled-coil region spans residues 159 to 185 (NETSAEVADLKKQCDVLVEEFEEVIED). Positions 221–282 (KGDTAALGGK…PLTHSPPDEL (62 aa)) are disordered. Residues 255–266 (DLDGDPSPEEDE) show a composition bias toward acidic residues.

It belongs to the canopy family. As to quaternary structure, interacts with HSP90B1; this interaction is disrupted in the presence of ATP. Interacts with TLR1, TLR2, TLR4 and TLR9.

It is found in the endoplasmic reticulum. In terms of biological role, toll-like receptor (TLR)-specific co-chaperone for HSP90B1. Required for proper TLR folding, except that of TLR3, and hence controls TLR exit from the endoplasmic reticulum. Consequently, required for both innate and adaptive immune responses. The sequence is that of Protein canopy homolog 3 (CNPY3) from Bos taurus (Bovine).